A 185-amino-acid polypeptide reads, in one-letter code: Lipopolysaccharide export system protein LptA (185 aa).

An N-terminal signal peptide occupies residues 1–27; that stretch reads MKFKTNKLSLNLVLASSLLAASIPAFA. The segment at 166 to 185 is disordered; it reads PSQLQDKNNKGQTPAQKKGN.

This sequence belongs to the LptA family. Component of the lipopolysaccharide transport and assembly complex.

It is found in the periplasm. Involved in the assembly of lipopolysaccharide (LPS). Required for the translocation of LPS from the inner membrane to the outer membrane. May form a bridge between the inner membrane and the outer membrane, via interactions with LptC and LptD, thereby facilitating LPS transfer across the periplasm. This chain is Lipopolysaccharide export system protein LptA, found in Escherichia coli O157:H7.